The following is a 123-amino-acid chain: UPF0102 protein Psyr_4114 (123 aa).

Belongs to the UPF0102 family.

The chain is UPF0102 protein Psyr_4114 from Pseudomonas syringae pv. syringae (strain B728a).